We begin with the raw amino-acid sequence, 336 residues long: UPF0284 protein Pcal_1534 (336 aa).

This sequence belongs to the UPF0284 family.

In Pyrobaculum calidifontis (strain DSM 21063 / JCM 11548 / VA1), this protein is UPF0284 protein Pcal_1534.